A 290-amino-acid polypeptide reads, in one-letter code: Protease HtpX homolog (290 aa).

The next 2 membrane-spanning stretches (helical) occupy residues 4 to 24 (IFLF…VLSL) and 39 to 59 (PMLL…SLLI). Histidine 144 serves as a coordination point for Zn(2+). Glutamate 145 is a catalytic residue. Residue histidine 148 participates in Zn(2+) binding. 2 helical membrane-spanning segments follow: residues 159 to 179 (LVQG…GYFV) and 197 to 217 (ITVI…VAWF). Zn(2+) is bound at residue glutamate 222.

Belongs to the peptidase M48B family. Zn(2+) is required as a cofactor.

The protein resides in the cell inner membrane. This chain is Protease HtpX homolog, found in Janthinobacterium sp. (strain Marseille) (Minibacterium massiliensis).